The sequence spans 311 residues: tRNA pseudouridine synthase B (311 aa).

A substrate-binding site is contributed by His-43. Asp-48 (nucleophile) is an active-site residue. Substrate contacts are provided by Tyr-76, Tyr-179, and Leu-200.

It belongs to the pseudouridine synthase TruB family. Type 1 subfamily.

It catalyses the reaction uridine(55) in tRNA = pseudouridine(55) in tRNA. Functionally, responsible for synthesis of pseudouridine from uracil-55 in the psi GC loop of transfer RNAs. In Sodalis glossinidius (strain morsitans), this protein is tRNA pseudouridine synthase B.